Here is a 962-residue protein sequence, read N- to C-terminus: Protease 3 (962 aa).

Positions 1 to 23 are cleaved as a signal peptide; the sequence is MPRSTWFKALLLLVALWGPAVQA. His-88 lines the Zn(2+) pocket. Residue Glu-91 is the Proton acceptor of the active site. The Zn(2+) site is built by His-92 and Glu-169.

This sequence belongs to the peptidase M16 family. In terms of assembly, monomer. Zn(2+) is required as a cofactor.

The protein resides in the periplasm. It carries out the reaction Preferential cleavage of 16-Tyr-|-Leu-17 and 25-Phe-|-Tyr-26 bonds of oxidized insulin B chain. Also acts on other substrates of Mw less than 7 kDa such as insulin and glucagon.. In terms of biological role, endopeptidase that degrades small peptides of less than 7 kDa, such as glucagon and insulin. In Salmonella typhi, this protein is Protease 3 (ptrA).